Here is a 342-residue protein sequence, read N- to C-terminus: Ornithine carbamoyltransferase, catabolic (342 aa).

Carbamoyl phosphate-binding positions include 59 to 62, S83, R110, and 137 to 140; these read STRT and HPTQ. L-ornithine contacts are provided by residues N169, D235, and 239–240; that span reads SL. Carbamoyl phosphate contacts are provided by residues 276–277 and R328; that span reads CL.

It belongs to the aspartate/ornithine carbamoyltransferase superfamily. OTCase family. In terms of assembly, dodecamer (tetramer of trimers).

It localises to the cytoplasm. It catalyses the reaction carbamoyl phosphate + L-ornithine = L-citrulline + phosphate + H(+). It participates in amino-acid degradation; L-arginine degradation via ADI pathway; carbamoyl phosphate from L-arginine: step 2/2. In terms of biological role, nvolved in the catabolism of arginine. Catalyzes the phosphorolysis of citrulline, the reverse reaction of the biosynthetic one, yielding ornithine and carbamoyl phosphate which serve to generate ATP from ADP. The protein is Ornithine carbamoyltransferase, catabolic (arcB) of Malacoplasma penetrans (strain HF-2) (Mycoplasma penetrans).